The following is a 358-amino-acid chain: DNA replication and repair protein RecF (358 aa).

30–37 serves as a coordination point for ATP; it reads GANGSGKT.

This sequence belongs to the RecF family.

It localises to the cytoplasm. Its function is as follows. The RecF protein is involved in DNA metabolism; it is required for DNA replication and normal SOS inducibility. RecF binds preferentially to single-stranded, linear DNA. It also seems to bind ATP. The polypeptide is DNA replication and repair protein RecF (Edwardsiella ictaluri (strain 93-146)).